The chain runs to 340 residues: Heat-inducible transcription repressor HrcA (340 aa).

It belongs to the HrcA family.

In terms of biological role, negative regulator of class I heat shock genes (grpE-dnaK-dnaJ and groELS operons). Prevents heat-shock induction of these operons. This chain is Heat-inducible transcription repressor HrcA, found in Mycoplasma capricolum subsp. capricolum (strain California kid / ATCC 27343 / NCTC 10154).